The sequence spans 612 residues: Phosphopentomutase (612 aa).

Residue Ala-2 is modified to N-acetylalanine. 2 residues coordinate alpha-D-glucose 1,6-bisphosphate: Arg-63 and Ser-165. Ser-165 (phosphoserine intermediate) is an active-site residue. Mg(2+) is bound by residues Ser-165, Asp-322, Asp-324, and Asp-326. At Ser-165 the chain carries Phosphoserine. 5 residues coordinate alpha-D-glucose 1,6-bisphosphate: Asp-326, Arg-327, Thr-400, Glu-424, and Lys-438.

It belongs to the phosphohexose mutase family. In terms of assembly, monomer. Mg(2+) is required as a cofactor.

It is found in the cytoplasm. Its subcellular location is the cytosol. The catalysed reaction is alpha-D-ribose 1-phosphate = D-ribose 5-phosphate. It carries out the reaction 2-deoxy-alpha-D-ribose 1-phosphate = 2-deoxy-D-ribose 5-phosphate. The enzyme catalyses alpha-D-glucose 1-phosphate = alpha-D-glucose 6-phosphate. It catalyses the reaction O-phospho-L-seryl-[protein] + alpha-D-glucose 1-phosphate = alpha-D-glucose 1,6-bisphosphate + L-seryl-[protein]. The catalysed reaction is alpha-D-glucose 1,6-bisphosphate + L-seryl-[protein] = O-phospho-L-seryl-[protein] + alpha-D-glucose 6-phosphate. In terms of biological role, catalyzes the conversion of the nucleoside breakdown products ribose-1-phosphate and deoxyribose-1-phosphate to the corresponding 5-phosphopentoses. Catalyzes the reversible isomerization of alpha-D-glucose 1-phosphate to alpha-D-glucose 6-phosphate but with a lower catalytic efficiency. The mechanism proceeds via the intermediate compound alpha-D-glucose 1,6-bisphosphate. In vitro, also has a low glucose 1,6-bisphosphate synthase activity which is most probably not physiologically relevant. The sequence is that of Phosphopentomutase (PGM2) from Pongo abelii (Sumatran orangutan).